Reading from the N-terminus, the 138-residue chain is Prefoldin subunit alpha (138 aa).

Belongs to the prefoldin subunit alpha family. Heterohexamer of two alpha and four beta subunits.

Its subcellular location is the cytoplasm. Functionally, molecular chaperone capable of stabilizing a range of proteins. Seems to fulfill an ATP-independent, HSP70-like function in archaeal de novo protein folding. This is Prefoldin subunit alpha from Methanococcoides burtonii (strain DSM 6242 / NBRC 107633 / OCM 468 / ACE-M).